The primary structure comprises 230 residues: Ribose-5-phosphate isomerase A (230 aa).

Substrate-binding positions include 31-34 (TGST), 88-91 (DGSD), and 101-104 (KGGG). Glutamate 110 functions as the Proton acceptor in the catalytic mechanism. Lysine 128 contacts substrate.

Belongs to the ribose 5-phosphate isomerase family. In terms of assembly, homodimer.

The catalysed reaction is aldehydo-D-ribose 5-phosphate = D-ribulose 5-phosphate. The protein operates within carbohydrate degradation; pentose phosphate pathway; D-ribose 5-phosphate from D-ribulose 5-phosphate (non-oxidative stage): step 1/1. Functionally, catalyzes the reversible conversion of ribose-5-phosphate to ribulose 5-phosphate. This is Ribose-5-phosphate isomerase A from Lactobacillus helveticus (strain DPC 4571).